A 621-amino-acid polypeptide reads, in one-letter code: Chaperone protein dnaK (621 aa).

The tract at residues 597-621 (VYSSTQQDNSKTEDGSVIDTNSKEA) is disordered.

The protein belongs to the heat shock protein 70 family.

Its subcellular location is the plastid. The protein resides in the chloroplast. Its function is as follows. Acts as a chaperone. The sequence is that of Chaperone protein dnaK from Gracilaria tenuistipitata var. liui (Red alga).